Consider the following 98-residue polypeptide: MAAEPLTELEAAIETVVTTFFTFAGREGRKGSLSVNEFKELVTQQLPHLLKDVGSLDEKMKSLDVNQDSELKFSEYWRLIGELAKEIRKEKALEIRKK.

The EF-hand domain maps to 18–53 (TTFFTFAGREGRKGSLSVNEFKELVTQQLPHLLKDV). Ca(2+) is bound by residues S32, E37, D64, N66, D68, E70, and E75. S32 bears the Phosphoserine mark.

It belongs to the S-100 family. Homodimer. Part of a copper-dependent multiprotein complex containing S100A13, FGF1 and SYT1. Interacts with FGF1 and SYT1. Interacts with IL1A.

It is found in the cytoplasm. It localises to the secreted. Plays a role in the export of proteins that lack a signal peptide and are secreted by an alternative pathway. Binds two calcium ions per subunit. Binds one copper ion. Binding of one copper ion does not interfere with calcium binding. Required for the copper-dependent stress-induced export of IL1A and FGF1. The calcium-free protein binds to lipid vesicles containing phosphatidylserine, but not to vesicles containing phosphatidylcholine. The sequence is that of Protein S100-A13 (S100A13) from Bos taurus (Bovine).